Consider the following 369-residue polypeptide: Coiled-coil domain-containing protein 130 homolog (369 aa).

Over residues 233–263 the composition is skewed to basic and acidic residues; that stretch reads TRYRDTKTHDDHLESSRDRIESRRIFRRPEE. The interval 233 to 369 is disordered; the sequence is TRYRDTKTHD…EYGNSSDDSD (137 aa). Low complexity predominate over residues 266-282; sequence TPSTSSGSSGGAVPSAS. Over residues 283 to 297 the composition is skewed to basic and acidic residues; the sequence is ERLKATMKAERDKRI. A compositionally biased stretch (low complexity) spans 299–310; the sequence is ASFSTAGTSSAT.

It belongs to the CWC16 family.

This Caenorhabditis elegans protein is Coiled-coil domain-containing protein 130 homolog.